We begin with the raw amino-acid sequence, 287 residues long: ATP synthase gamma chain (287 aa).

The protein belongs to the ATPase gamma chain family. As to quaternary structure, F-type ATPases have 2 components, CF(1) - the catalytic core - and CF(0) - the membrane proton channel. CF(1) has five subunits: alpha(3), beta(3), gamma(1), delta(1), epsilon(1). CF(0) has three main subunits: a, b and c.

It localises to the cell inner membrane. Produces ATP from ADP in the presence of a proton gradient across the membrane. The gamma chain is believed to be important in regulating ATPase activity and the flow of protons through the CF(0) complex. The chain is ATP synthase gamma chain from Yersinia pestis.